We begin with the raw amino-acid sequence, 333 residues long: Fe(3+)-citrate import system permease protein YfmE (333 aa).

8 helical membrane-spanning segments follow: residues 12–32, 65–85, 95–115, 120–140, 194–214, 238–258, 279–299, and 306–326; these read LLAILILAVILIVLSVISIGI, IILAILAGAGLAAAGAILQGV, VVGISKGSGLAAMAVILIFPE, VLPFSAFAGAAIIAVLLLMIA, EVKLLAPWLLILFPIVCILIP, FILIFTAVALAGSCVAVVGSI, YLLPASALIGAIILLIADTLG, and VEIPAGILTAVIGAPYFLYLL.

The protein belongs to the binding-protein-dependent transport system permease family. FecCD subfamily. As to quaternary structure, the complex is composed of one ATP-binding protein (YfmF), two transmembrane proteins (YfmD and YfmE) and a solute-binding protein (YfmC).

It is found in the cell membrane. Functionally, part of the ABC transporter complex YfmCDEF involved in citrate-dependent Fe(3+) import. Involved in the translocation of the substrate across the membrane. The polypeptide is Fe(3+)-citrate import system permease protein YfmE (yfmE) (Bacillus subtilis (strain 168)).